The chain runs to 86 residues: Sulmotoxin 2 (86 aa).

A signal peptide spans 1 to 21; sequence MKTLLLALAVVAFMCLDSVYP. 5 disulfide bridges follow: Cys24–Cys47, Cys27–Cys35, Cys41–Cys62, Cys66–Cys77, and Cys78–Cys83.

It belongs to the three-finger toxin family. Ancestral subfamily. Boigatoxin sub-subfamily. In terms of assembly, monomer. Expressed by the venom gland.

It is found in the secreted. Functionally, probable neurotoxin. Is not toxic to mice and geckos. The sequence is that of Sulmotoxin 2 from Spilotes sulphureus (Amazon puffing snake).